The chain runs to 229 residues: MKLVLIRHGQSEWNKLNLFTGWHDVDLSQEGVVEAMTAGKRIKEAGLEFDVAFTSVLTRAIKTLNYVLEESDQMWVPVHKSWRLNERHYGALQGLNKQETAEKYGADQVQKWRRSYDTLPPLLEENDERQAKNDRRYQLLDTHAIPAGENLKVTLERVIPYWMDTIAPEIKEGRRVVIAAHGNSLRALVKFLEGIGDDEIMDLEIPTGVPLVYELNDDLKPVNKYYLDK.

Residues 7–14, 20–21, R59, 86–89, K97, 113–114, and 182–183 each bind substrate; these read RHGQSEWN, TG, ERHY, RR, and GN. Catalysis depends on H8, which acts as the Tele-phosphohistidine intermediate. E86 (proton donor/acceptor) is an active-site residue.

It belongs to the phosphoglycerate mutase family. BPG-dependent PGAM subfamily.

The enzyme catalyses (2R)-2-phosphoglycerate = (2R)-3-phosphoglycerate. It participates in carbohydrate degradation; glycolysis; pyruvate from D-glyceraldehyde 3-phosphate: step 3/5. Catalyzes the interconversion of 2-phosphoglycerate and 3-phosphoglycerate. In Listeria monocytogenes serotype 4b (strain F2365), this protein is 2,3-bisphosphoglycerate-dependent phosphoglycerate mutase.